We begin with the raw amino-acid sequence, 369 residues long: F-box protein At3g08750 (369 aa).

The region spanning 6-53 (CLLLPSLPFELIEEILYKIPAESLIRFKSTCKKWYNLITEKRFMYNHL) is the F-box domain.

This Arabidopsis thaliana (Mouse-ear cress) protein is F-box protein At3g08750.